We begin with the raw amino-acid sequence, 183 residues long: Holliday junction branch migration complex subunit RuvA (183 aa).

Residues 1-63 (MIVGLIGVVE…EDAHLLYGFL (63 aa)) form a domain I region. Residues 64-139 (EEGEKILFER…FFIQDENRPA (76 aa)) form a domain II region. A139 is a region of interest (flexible linker). The tract at residues 139-183 (ARNEVFLALESLGFKSAEINQVLKTLKPNLSIEAAIKEALQQLRS) is domain III.

The protein belongs to the RuvA family. Homotetramer. Forms an RuvA(8)-RuvB(12)-Holliday junction (HJ) complex. HJ DNA is sandwiched between 2 RuvA tetramers; dsDNA enters through RuvA and exits via RuvB. An RuvB hexamer assembles on each DNA strand where it exits the tetramer. Each RuvB hexamer is contacted by two RuvA subunits (via domain III) on 2 adjacent RuvB subunits; this complex drives branch migration. In the full resolvosome a probable DNA-RuvA(4)-RuvB(12)-RuvC(2) complex forms which resolves the HJ.

The protein localises to the cytoplasm. Functionally, the RuvA-RuvB-RuvC complex processes Holliday junction (HJ) DNA during genetic recombination and DNA repair, while the RuvA-RuvB complex plays an important role in the rescue of blocked DNA replication forks via replication fork reversal (RFR). RuvA specifically binds to HJ cruciform DNA, conferring on it an open structure. The RuvB hexamer acts as an ATP-dependent pump, pulling dsDNA into and through the RuvAB complex. HJ branch migration allows RuvC to scan DNA until it finds its consensus sequence, where it cleaves and resolves the cruciform DNA. The protein is Holliday junction branch migration complex subunit RuvA of Helicobacter pylori (strain ATCC 700392 / 26695) (Campylobacter pylori).